We begin with the raw amino-acid sequence, 62 residues long: Bacteriocin pediocin PA-1 (62 aa).

Residues 1–18 constitute a propeptide that is removed on maturation; the sequence is MKKIEKLTEKEMANIIGG. 2 disulfide bridges follow: cysteine 27/cysteine 32 and cysteine 42/cysteine 62. A hydrophobic region spans residues 40-52; the sequence is TTCIINNGAMAWA.

It belongs to the bacteriocin class IIA/YGNGV family.

It localises to the secreted. Functionally, bactericidal activity (effective inhibitor of L.monocytogenes). This chain is Bacteriocin pediocin PA-1 (pedA), found in Pediococcus acidilactici.